Here is a 119-residue protein sequence, read N- to C-terminus: Large ribosomal subunit protein bL20 (119 aa).

It belongs to the bacterial ribosomal protein bL20 family.

In terms of biological role, binds directly to 23S ribosomal RNA and is necessary for the in vitro assembly process of the 50S ribosomal subunit. It is not involved in the protein synthesizing functions of that subunit. This is Large ribosomal subunit protein bL20 from Metamycoplasma arthritidis (strain 158L3-1) (Mycoplasma arthritidis).